A 1011-amino-acid chain; its full sequence is Protein translocase subunit SecA (1011 aa).

Residues glutamine 87, 105–109 (GEGKT), and aspartate 500 each bind ATP. A disordered region spans residues 969–1011 (SLPLGANPAPARPQPAVMQEQECPCGSGKPFNKCHGGEDEATA). 4 residues coordinate Zn(2+): cysteine 991, cysteine 993, cysteine 1002, and histidine 1003.

The protein belongs to the SecA family. Monomer and homodimer. Part of the essential Sec protein translocation apparatus which comprises SecA, SecYEG and auxiliary proteins SecDF-YajC and YidC. It depends on Zn(2+) as a cofactor.

It is found in the cell inner membrane. Its subcellular location is the cytoplasm. It catalyses the reaction ATP + H2O + cellular proteinSide 1 = ADP + phosphate + cellular proteinSide 2.. Functionally, part of the Sec protein translocase complex. Interacts with the SecYEG preprotein conducting channel. Has a central role in coupling the hydrolysis of ATP to the transfer of proteins into and across the cell membrane, serving as an ATP-driven molecular motor driving the stepwise translocation of polypeptide chains across the membrane. This chain is Protein translocase subunit SecA, found in Sorangium cellulosum (strain So ce56) (Polyangium cellulosum (strain So ce56)).